The chain runs to 85 residues: Large ribosomal subunit protein bL27 (85 aa).

Residues 1 to 22 are disordered; the sequence is MAHKKAGGSTNNGRDSESKRLG.

Belongs to the bacterial ribosomal protein bL27 family.

The sequence is that of Large ribosomal subunit protein bL27 from Psychromonas ingrahamii (strain DSM 17664 / CCUG 51855 / 37).